The primary structure comprises 86 residues: Synergistic-like venom protein (86 aa).

A signal peptide spans 1–21 (MKTLLLTLVVVTIVCLDLGYT). Disulfide bonds link Cys-24/Cys-45, Cys-38/Cys-63, Cys-67/Cys-78, and Cys-79/Cys-84.

It belongs to the three-finger toxin family. Short-chain subfamily. Aminergic toxin sub-subfamily. Expressed by the venom gland.

It is found in the secreted. This chain is Synergistic-like venom protein, found in Dendroaspis angusticeps (Eastern green mamba).